Here is a 423-residue protein sequence, read N- to C-terminus: Histidine--tRNA ligase (423 aa).

Belongs to the class-II aminoacyl-tRNA synthetase family. As to quaternary structure, homodimer.

Its subcellular location is the cytoplasm. The enzyme catalyses tRNA(His) + L-histidine + ATP = L-histidyl-tRNA(His) + AMP + diphosphate + H(+). This chain is Histidine--tRNA ligase, found in Rhodococcus jostii (strain RHA1).